The chain runs to 266 residues: Zinc finger protein SNAI2 (266 aa).

The tract at residues 1-20 (MPRSFLVKKHFNSAKKPNYG) is SNAG domain. Positions 75–115 (SGYPSSLGRVSPPPQSDTSSKDHSGSESPISDEEERLQTKL) are disordered. 4 consecutive C2H2-type zinc fingers follow at residues 126–148 (FQCS…KQLH), 157–179 (FSCK…IRTH), 183–205 (CVCK…IRTH), and 211–233 (FSCP…LQTH). Residues 239–262 (YQCKNCSKTFSRMSLLHKHEESGC) form a C2H2-type 5; atypical zinc finger.

This sequence belongs to the snail C2H2-type zinc-finger protein family. As to quaternary structure, interacts (via SNAG domain) with limd1 (via LIM domains), wtip (via LIM domains) and ajuba (via LIM domains). Interacts with elp3. As to expression, first expressed on the lateral side of stage 12 embryos. At stage 14, strongly expressed in the lateral neural folds. At stage 16, expressed in pre-migratory neural crest cells. At stage 18, expression is dispersed over the neural plate in a pattern surrounding the rhombomeres. At stage 22, expressed in neural crest derivatives, including the branchial arches and the tissues surrounding the eyes and forebrain. After stage 17, expression is weak in the lateral plate mesoderm, increasing at stage 26, but was down-regulated in the pronephros region at stage 26.

It is found in the nucleus. In terms of biological role, probable transcriptional repressor. Acts downstream of snai1 in the specification of the neural crest and neural crest migration. This is Zinc finger protein SNAI2 (snai2) from Xenopus laevis (African clawed frog).